Here is a 176-residue protein sequence, read N- to C-terminus: F(420)H(2) dehydrogenase subunit J (176 aa).

The next 5 helical transmembrane spans lie at 13–33 (TAVF…VVIA), 39–59 (AGLA…LLNA), 64–84 (VIQV…AVML), 99–119 (PLAF…AFGT), and 140–160 (IGML…IVLL).

It belongs to the complex I subunit 6 family. The FPO complex is composed of at least 13 different subunits. FpoA, FpoH, FpoJ, FpoK, FpoL, FpoM and FpoN proteins constitute the membrane sector of the complex.

The protein localises to the cell membrane. The enzyme catalyses methanophenazine + reduced coenzyme F420-(gamma-L-Glu)(n) = dihydromethanophenazine + oxidized coenzyme F420-(gamma-L-Glu)(n) + H(+). Functionally, component of the F(420)H(2) dehydrogenase (FPO complex) which is part of the energy-conserving F(420)H(2):heterodisulfide oxidoreductase system. The membrane-bound electron transfer system of the complex plays an important role in the metabolism of methylotrophic methanogens when the organisms grow on methanol or methylamines. Catalyzes the oxidation of methanophenazine to dihydromethanophenazine. It shuttles electrons from F(420)H(2), via FAD and iron-sulfur (Fe-S) centers, to methanophenazine (an electron carrier in the membrane). It couples the redox reaction to proton translocation (for every two electrons transferred, two hydrogen ions are translocated across the cytoplasmic membrane), and thus conserves the redox energy in a proton gradient. It also catalyzes the oxidation of F(420)H(2) with quinones such as 2,3-dimethyl-1,4-naphthoquinone, 2-methyl-1,4-naphthoquinone and tetramethyl-p-benzoquinone. The chain is F(420)H(2) dehydrogenase subunit J (fpoJ) from Methanosarcina mazei (strain ATCC BAA-159 / DSM 3647 / Goe1 / Go1 / JCM 11833 / OCM 88) (Methanosarcina frisia).